Reading from the N-terminus, the 340-residue chain is GTP-binding protein REM 2 (340 aa).

Residues 1-13 (MHTDLDTDMDMDT) are compositionally biased toward acidic residues. The interval 1-107 (MHTDLDTDMD…SDSLGSGEAA (107 aa)) is disordered. A Phosphoserine modification is found at S27. The segment covering 40–53 (LLKKSEKLLAELDR) has biased composition (basic and acidic residues). The span at 93–104 (SSSGSSDSLGSG) shows a compositional bias: low complexity. Residues 121-128 (GESGVGKS), 229-232 (NKSD), and 260-261 (AA) contribute to the GTP site. Residues 283–308 (RNHAGGQRPDPGSPEGPAPPARRESL) form a disordered region. Over residues 293–302 (PGSPEGPAPP) the composition is skewed to pro residues. S295 is subject to Phosphoserine.

This sequence belongs to the small GTPase superfamily. RGK family.

The protein resides in the cell membrane. Binds GTP saturably and exhibits a low intrinsic rate of GTP hydrolysis. The protein is GTP-binding protein REM 2 (REM2) of Homo sapiens (Human).